The chain runs to 142 residues: Transcriptional regulator MraZ (142 aa).

SpoVT-AbrB domains lie at 5–47 and 76–119; these read THTP…PAPE and AHDE…DRVA.

Belongs to the MraZ family. In terms of assembly, forms oligomers.

The protein resides in the cytoplasm. It localises to the nucleoid. The chain is Transcriptional regulator MraZ from Salinispora arenicola (strain CNS-205).